Here is a 728-residue protein sequence, read N- to C-terminus: 1,4-alpha-glucan branching enzyme GlgB (728 aa).

D405 acts as the Nucleophile in catalysis. E458 serves as the catalytic Proton donor.

This sequence belongs to the glycosyl hydrolase 13 family. GlgB subfamily. As to quaternary structure, monomer.

The catalysed reaction is Transfers a segment of a (1-&gt;4)-alpha-D-glucan chain to a primary hydroxy group in a similar glucan chain.. Its pathway is glycan biosynthesis; glycogen biosynthesis. Its function is as follows. Catalyzes the formation of the alpha-1,6-glucosidic linkages in glycogen by scission of a 1,4-alpha-linked oligosaccharide from growing alpha-1,4-glucan chains and the subsequent attachment of the oligosaccharide to the alpha-1,6 position. The chain is 1,4-alpha-glucan branching enzyme GlgB from Citrobacter koseri (strain ATCC BAA-895 / CDC 4225-83 / SGSC4696).